A 153-amino-acid chain; its full sequence is Peptidoglycan-associated lipoprotein (153 aa).

The signal sequence occupies residues 1-19 (MNKFVKSLLVAGSVAALAA). Cys20 is lipidated: N-palmitoyl cysteine. The S-diacylglycerol cysteine moiety is linked to residue Cys20. In terms of domain architecture, OmpA-like spans 40–153 (SVADLQQRYN…SKNRRAVLAY (114 aa)). 2 peptidoglycan binding regions span residues 55 to 56 (FD) and 97 to 101 (YNIAL).

The protein belongs to the Pal lipoprotein family. As to quaternary structure, the Tol-Pal system is composed of five core proteins: the inner membrane proteins TolA, TolQ and TolR, the periplasmic protein TolB and the outer membrane protein Pal. They form a network linking the inner and outer membranes and the peptidoglycan layer.

The protein resides in the cell outer membrane. Part of the Tol-Pal system, which plays a role in outer membrane invagination during cell division and is important for maintaining outer membrane integrity. The sequence is that of Peptidoglycan-associated lipoprotein from Haemophilus influenzae (strain ATCC 51907 / DSM 11121 / KW20 / Rd).